The following is a 500-amino-acid chain: Cholesterol 24-hydroxylase (500 aa).

A helical transmembrane segment spans residues 3 to 23 (PGLLLLGSAVLLAFGLCCTFV). Position 437 (C437) interacts with heme.

This sequence belongs to the cytochrome P450 family. The cofactor is heme. Expressed in high level in the pyramidal cells of the hippocampus, Purkinje cells of the cerebellum, and neuronal cell bodies in layers II/III, V, and VI of the cortex. Expressed in hippocampal and cerebellar interneurons, in retinal ganglion cells, and in a subset of retinal cells localized to the inner nuclear layer (at protein level).

Its subcellular location is the endoplasmic reticulum membrane. It is found in the microsome membrane. The protein localises to the postsynapse. It localises to the presynapse. The protein resides in the cell projection. Its subcellular location is the dendrite. The catalysed reaction is cholesterol + reduced [NADPH--hemoprotein reductase] + O2 = (24S)-hydroxycholesterol + oxidized [NADPH--hemoprotein reductase] + H2O + H(+). The enzyme catalyses cholestanol + reduced [NADPH--hemoprotein reductase] + O2 = (24S)-hydroxycholestanol + oxidized [NADPH--hemoprotein reductase] + H2O + H(+). It catalyses the reaction 7-dehydrocholesterol + reduced [NADPH--hemoprotein reductase] + O2 = cholesta-5,7-dien-3beta,24S-diol + oxidized [NADPH--hemoprotein reductase] + H2O + H(+). It carries out the reaction 7-dehydrocholesterol + reduced [NADPH--hemoprotein reductase] + O2 = cholesta-5,7-dien-3beta,25-diol + oxidized [NADPH--hemoprotein reductase] + H2O + H(+). The catalysed reaction is desmosterol + reduced [NADPH--hemoprotein reductase] + O2 = (24Z),26-hydroxydesmosterol + oxidized [NADPH--hemoprotein reductase] + H2O + H(+). The enzyme catalyses desmosterol + reduced [NADPH--hemoprotein reductase] + O2 = (24S)-25-epoxycholesterol + oxidized [NADPH--hemoprotein reductase] + H2O + H(+). It catalyses the reaction 4beta-hydroxycholesterol + reduced [NADPH--hemoprotein reductase] + O2 = 4beta,24S-dihydroxycholesterol + oxidized [NADPH--hemoprotein reductase] + H2O + H(+). It carries out the reaction (24S)-hydroxycholesterol + reduced [NADPH--hemoprotein reductase] + O2 = (24S,25R)-24,26-dihydroxycholesterol + oxidized [NADPH--hemoprotein reductase] + H2O + H(+). The catalysed reaction is (24S)-hydroxycholesterol + reduced [NADPH--hemoprotein reductase] + O2 = 24S,25-dihydroxycholesterol + oxidized [NADPH--hemoprotein reductase] + H2O + H(+). The enzyme catalyses 7alpha-hydroxycholesterol + reduced [NADPH--hemoprotein reductase] + O2 = (24S)-7alpha-dihydroxycholesterol + oxidized [NADPH--hemoprotein reductase] + H2O + H(+). It catalyses the reaction progesterone + reduced [NADPH--hemoprotein reductase] + O2 = 17alpha-hydroxyprogesterone + oxidized [NADPH--hemoprotein reductase] + H2O + H(+). It carries out the reaction testosterone + reduced [NADPH--hemoprotein reductase] + O2 = 16beta,17beta-dihydroxyandrost-4-en-3-one + oxidized [NADPH--hemoprotein reductase] + H2O + H(+). The catalysed reaction is testosterone + reduced [NADPH--hemoprotein reductase] + O2 = 2-hydroxytestosterone + oxidized [NADPH--hemoprotein reductase] + H2O + H(+). The enzyme catalyses testosterone + reduced [NADPH--hemoprotein reductase] + O2 = 6beta,17beta-dihydroxyandrost-4-en-3-one + oxidized [NADPH--hemoprotein reductase] + H2O + H(+). It participates in steroid metabolism; cholesterol degradation. Its pathway is lipid metabolism; C21-steroid hormone metabolism. P450 monooxygenase that plays a major role in cholesterol homeostasis in the brain. Primarily catalyzes the hydroxylation (with S stereochemistry) at C-24 of cholesterol side chain, triggering cholesterol diffusion out of neurons and its further degradation. By promoting constant cholesterol elimination in neurons, may activate the mevalonate pathway and coordinate the synthesis of new cholesterol and nonsterol isoprenoids involved in synaptic activity and learning. Further hydroxylates cholesterol derivatives and hormone steroids on both the ring and side chain of these molecules, converting them into active oxysterols involved in lipid signaling and biosynthesis. Acts as an epoxidase converting cholesta-5,24-dien-3beta-ol/desmosterol into (24S),25-epoxycholesterol, an abundant lipid ligand of nuclear NR1H2 and NR1H3 receptors shown to promote neurogenesis in developing brain. May also catalyze the oxidative metabolism of xenobiotics, such as clotrimazole. This chain is Cholesterol 24-hydroxylase, found in Mus musculus (Mouse).